A 299-amino-acid polypeptide reads, in one-letter code: tRNA pseudouridine synthase B (299 aa).

The Nucleophile role is filled by aspartate 47.

Belongs to the pseudouridine synthase TruB family. Type 1 subfamily.

The enzyme catalyses uridine(55) in tRNA = pseudouridine(55) in tRNA. In terms of biological role, responsible for synthesis of pseudouridine from uracil-55 in the psi GC loop of transfer RNAs. This Dechloromonas aromatica (strain RCB) protein is tRNA pseudouridine synthase B.